Reading from the N-terminus, the 1048-residue chain is Calcium-transporting ATPase, endoplasmic reticulum-type (1048 aa).

Over M1–D63 the chain is Cytoplasmic. Residues T64–Q84 traverse the membrane as a helical segment. The Lumenal segment spans residues D85–E93. The helical transmembrane segment at A94–W114 threads the bilayer. Residues Q115 to M213 lie on the Cytoplasmic side of the membrane. Residues V214–M234 traverse the membrane as a helical segment. Over C235–R267 the chain is Lumenal. Residues L268–L288 traverse the membrane as a helical segment. Residues S289–K312 lie on the Cytoplasmic side of the membrane. The chain crosses the membrane as a helical span at residues I313–C333. The Ca(2+) site is built by V319, A320, I322, and E324. The Lumenal segment spans residues L334–S800. D366 functions as the 4-aspartylphosphate intermediate in the catalytic mechanism. D728 and D732 together coordinate Mg(2+). 2 residues coordinate Ca(2+): N794 and E797. Residues I801–V821 form a helical membrane-spanning segment. N822, T825, and D826 together coordinate Ca(2+). Residues N822–R862 lie on the Cytoplasmic side of the membrane. A helical transmembrane segment spans residues Y863–T883. The Lumenal portion of the chain corresponds to Q884–K944. A helical transmembrane segment spans residues A945–L965. E957 lines the Ca(2+) pocket. At S966–W981 the chain is on the cytoplasmic side. A helical transmembrane segment spans residues L982–L1002. The Lumenal segment spans residues A1003–G1007. Residues I1008–L1028 form a helical membrane-spanning segment. The Cytoplasmic segment spans residues I1029–A1048.

The protein belongs to the cation transport ATPase (P-type) (TC 3.A.3) family. Type IIA subfamily. 9-fold higher level in roots compared with leaves.

The protein resides in the endoplasmic reticulum membrane. It carries out the reaction Ca(2+)(in) + ATP + H2O = Ca(2+)(out) + ADP + phosphate + H(+). This magnesium-dependent enzyme catalyzes the hydrolysis of ATP coupled with the translocation of calcium from the cytosol to an endomembrane compartment. The polypeptide is Calcium-transporting ATPase, endoplasmic reticulum-type (Solanum lycopersicum (Tomato)).